A 278-amino-acid chain; its full sequence is 3-oxoacyl-[acyl-carrier-protein] reductase (278 aa).

Positions 13, 14, 16, 36, 40, 44, 66, 67, 77, 122, 125, and 126 each coordinate NADP(+). The Proton donor role is filled by serine 182. Residues tyrosine 198, lysine 202, leucine 230, and valine 231 each coordinate NADP(+). Catalysis depends on tyrosine 198, which acts as the Proton acceptor. The active-site Lowers pKa of active site Tyr is the lysine 202.

This sequence belongs to the short-chain dehydrogenases/reductases (SDR) family.

The protein resides in the mitochondrion. The catalysed reaction is a (3R)-hydroxyacyl-[ACP] + NADP(+) = a 3-oxoacyl-[ACP] + NADPH + H(+). Its pathway is lipid metabolism; fatty acid biosynthesis. In terms of biological role, involved in biosynthesis of fatty acids in mitochondria. This is 3-oxoacyl-[acyl-carrier-protein] reductase (OAR1) from Saccharomyces cerevisiae (strain ATCC 204508 / S288c) (Baker's yeast).